The chain runs to 38 residues: Large ribosomal subunit protein bL36 (38 aa).

Belongs to the bacterial ribosomal protein bL36 family.

This Chlorobium limicola (strain DSM 245 / NBRC 103803 / 6330) protein is Large ribosomal subunit protein bL36.